Here is a 272-residue protein sequence, read N- to C-terminus: Shikimate dehydrogenase (NADP(+)) (272 aa).

Shikimate is bound by residues 14-16 (SKS) and T61. Residue K65 is the Proton acceptor of the active site. E77 provides a ligand contact to NADP(+). Positions 86 and 102 each coordinate shikimate. Residues 126–130 (GAGGA), 149–154 (NRTVSR), and M213 each bind NADP(+). A shikimate-binding site is contributed by Y215. G237 lines the NADP(+) pocket.

Belongs to the shikimate dehydrogenase family. In terms of assembly, homodimer.

It catalyses the reaction shikimate + NADP(+) = 3-dehydroshikimate + NADPH + H(+). It functions in the pathway metabolic intermediate biosynthesis; chorismate biosynthesis; chorismate from D-erythrose 4-phosphate and phosphoenolpyruvate: step 4/7. Its function is as follows. Involved in the biosynthesis of the chorismate, which leads to the biosynthesis of aromatic amino acids. Catalyzes the reversible NADPH linked reduction of 3-dehydroshikimate (DHSA) to yield shikimate (SA). In Escherichia coli O7:K1 (strain IAI39 / ExPEC), this protein is Shikimate dehydrogenase (NADP(+)).